The following is a 130-amino-acid chain: Small ribosomal subunit protein eS6 (130 aa).

Residues 78-98 (SGPPGFRPERKGERRRKTVRG) form a disordered region.

The protein belongs to the eukaryotic ribosomal protein eS6 family.

This chain is Small ribosomal subunit protein eS6, found in Methanopyrus kandleri (strain AV19 / DSM 6324 / JCM 9639 / NBRC 100938).